Here is a 339-residue protein sequence, read N- to C-terminus: DNA-directed RNA polymerase subunit alpha (339 aa).

An alpha N-terminal domain (alpha-NTD) region spans residues 1 to 233 (MVREEVAGST…DLFLPFLHAE (233 aa)). The tract at residues 266-339 (GIPLNCIFID…IDLLKNKLSF (74 aa)) is alpha C-terminal domain (alpha-CTD).

Belongs to the RNA polymerase alpha chain family. In plastids the minimal PEP RNA polymerase catalytic core is composed of four subunits: alpha, beta, beta', and beta''. When a (nuclear-encoded) sigma factor is associated with the core the holoenzyme is formed, which can initiate transcription.

The protein localises to the plastid. Its subcellular location is the chloroplast. The catalysed reaction is RNA(n) + a ribonucleoside 5'-triphosphate = RNA(n+1) + diphosphate. In terms of biological role, DNA-dependent RNA polymerase catalyzes the transcription of DNA into RNA using the four ribonucleoside triphosphates as substrates. This Psathyrostachys juncea (Russian wildrye) protein is DNA-directed RNA polymerase subunit alpha.